Here is a 430-residue protein sequence, read N- to C-terminus: tRNA(Ile)-lysidine synthase (430 aa).

21 to 26 (SGGLDS) serves as a coordination point for ATP.

The protein belongs to the tRNA(Ile)-lysidine synthase family.

It is found in the cytoplasm. It carries out the reaction cytidine(34) in tRNA(Ile2) + L-lysine + ATP = lysidine(34) in tRNA(Ile2) + AMP + diphosphate + H(+). In terms of biological role, ligates lysine onto the cytidine present at position 34 of the AUA codon-specific tRNA(Ile) that contains the anticodon CAU, in an ATP-dependent manner. Cytidine is converted to lysidine, thus changing the amino acid specificity of the tRNA from methionine to isoleucine. This is tRNA(Ile)-lysidine synthase from Salmonella schwarzengrund (strain CVM19633).